A 316-amino-acid polypeptide reads, in one-letter code: Cytochrome c biogenesis protein CcsA (316 aa).

7 consecutive transmembrane segments (helical) span residues 15–35, 44–64, 71–91, 142–162, 220–240, 247–267, and 281–301; these read FSIC…TTIL, GIIT…IYSG, LYES…VAYL, MILS…LLVI, VISL…VWAN, WSWD…AIYL, and AIVA…VNLL.

The protein belongs to the CcmF/CycK/Ccl1/NrfE/CcsA family. As to quaternary structure, may interact with Ccs1.

It localises to the plastid. It is found in the chloroplast thylakoid membrane. Its function is as follows. Required during biogenesis of c-type cytochromes (cytochrome c6 and cytochrome f) at the step of heme attachment. The polypeptide is Cytochrome c biogenesis protein CcsA (Trachelium caeruleum (Blue throatwort)).